The following is a 473-amino-acid chain: Putative malate dehydrogenase 1B (473 aa).

It belongs to the LDH/MDH superfamily. MDH type 2 family.

The chain is Putative malate dehydrogenase 1B (MDH1B) from Bos taurus (Bovine).